The sequence spans 98 residues: Integration host factor subunit alpha (98 aa).

The disordered stretch occupies residues 49 to 70 (FGNFDLRDKNQRPGRNPKTGED).

Belongs to the bacterial histone-like protein family. Heterodimer of an alpha and a beta chain.

Functionally, this protein is one of the two subunits of integration host factor, a specific DNA-binding protein that functions in genetic recombination as well as in transcriptional and translational control. The protein is Integration host factor subunit alpha of Serratia proteamaculans (strain 568).